The following is a 209-amino-acid chain: Cytidylyl-2-hydroxypropylphosphonate hydrolase (209 aa).

4 residues coordinate a divalent metal cation: Asn-111, Asp-127, Glu-129, and Asp-131. Lys-144 functions as the Proton donor in the catalytic mechanism. Asp-145 contributes to the a divalent metal cation binding site.

Belongs to the FomD family. In terms of assembly, monomer in solution. Requires Mn(2+) as cofactor. The cofactor is Co(2+).

It carries out the reaction cytidine 5'-({hydroxy[(S)-2-hydroxypropyl]phosphonoyl}phosphate) + H2O = (S)-2-hydroxypropylphosphonate + CMP + H(+). It participates in antibiotic biosynthesis; fosfomycin biosynthesis. Its activity is regulated as follows. Hydrolysis of (S)-HPP-CMP is inhibited by CDP. Its function is as follows. Involved in fosfomycin biosynthesis. Catalyzes the hydrolysis of cytidylyl (S)-2-hydroxypropylphosphonate ((S)-HPP-CMP) to give (S)-2-hydroxypropylphosphonate ((S)-HPP) and CMP. Can also hydrolyze (R)-HPP-CMP and cytidylyl 2-hydroxyethylphosphonate (HEP-CMP), which is a biosynthetic intermediate before C-methylation, but the catalytic efficiency is much higher with (S)-HPP-CMP. The sequence is that of Cytidylyl-2-hydroxypropylphosphonate hydrolase from Streptomyces wedmorensis.